The primary structure comprises 75 residues: UPF0346 protein LGAS_0911 (75 aa).

It belongs to the UPF0346 family.

The polypeptide is UPF0346 protein LGAS_0911 (Lactobacillus gasseri (strain ATCC 33323 / DSM 20243 / BCRC 14619 / CIP 102991 / JCM 1131 / KCTC 3163 / NCIMB 11718 / NCTC 13722 / AM63)).